We begin with the raw amino-acid sequence, 131 residues long: Small ribosomal subunit protein uS8 (131 aa).

It belongs to the universal ribosomal protein uS8 family. In terms of assembly, part of the 30S ribosomal subunit. Contacts proteins S5 and S12.

One of the primary rRNA binding proteins, it binds directly to 16S rRNA central domain where it helps coordinate assembly of the platform of the 30S subunit. In Azobacteroides pseudotrichonymphae genomovar. CFP2, this protein is Small ribosomal subunit protein uS8.